The sequence spans 589 residues: Oligo-1,6-glucosidase IMA3 (589 aa).

Asp-215 serves as the catalytic Nucleophile. Residue Glu-277 is the Proton donor of the active site.

It belongs to the glycosyl hydrolase 13 family.

Its subcellular location is the cytoplasm. It carries out the reaction Hydrolysis of (1-&gt;6)-alpha-D-glucosidic linkages in some oligosaccharides produced from starch and glycogen by alpha-amylase, and in isomaltose.. Functionally, alpha-glucosidase with broad substrate specificity for alpha-1,4- and alpha-1,6-glucosides. Not required for isomaltose utilization, but overexpression allows the IMA1 null mutant to grow on isomaltose. The protein is Oligo-1,6-glucosidase IMA3 (IMA3) of Saccharomyces cerevisiae (strain ATCC 204508 / S288c) (Baker's yeast).